A 115-amino-acid chain; its full sequence is Hydrogenase maturation factor HypA (115 aa).

His2 is a Ni(2+) binding site. Cys73, Cys76, Cys89, and Cys92 together coordinate Zn(2+).

Belongs to the HypA/HybF family.

Its function is as follows. Involved in the maturation of [NiFe] hydrogenases. Required for nickel insertion into the metal center of the hydrogenase. In Shewanella halifaxensis (strain HAW-EB4), this protein is Hydrogenase maturation factor HypA.